Reading from the N-terminus, the 745-residue chain is MEVKRLKVTELRSELQRRGLDSRGLKMDLAQRLQEALDAEMLEDEAGVGGAGPGGACKAEPRPVAASGGGPGGDEEEEDDDEEEDEEALLEDEDEEPPPAQALGQAAQPPPEPPETSAMEAESEASDTPAEATAGSGGVNGGEEHDNGKGEEDGPEERSGDETPGSEAPGDKAVEEQGDDQDSEKSKPAGSDGERRGVKRQRDEKDEHGRAYYEFREEAYHSRSKSPPPPEEEAKDEEEDQTLVNLDTYTSDLHFQISKDRYGGQPLFSEKFPTLWSGARSTYGVTKGKVCFEAKVTQNLPMKEGCTEVSLLRVGWSVDFSCSQLGEDEFSYGFDGRGLKAENGQFEEFGQTFGENDVIGCFANFETEEVELSFSKNGEDLGVAFRISKESLADRALLPHVLCKNCVVELNFGQKEEPFFPPPEEFVFIHAVPVEERVRTAVPPKTIEECEVILMVGLPGSGKTQWALKYAKDNPERRYNVLGAETVLTQMRMKGLEEPEMDPKSRDLLVQQASQCLSKLVQIASRSKRNFILDQCNVYNSGQRRKLLLFKTFSRKVVVVVPNEEDWKRRLELRKEVEGDDVPESIMLEMKANFSLPEKCDYMDEVTYGELEKEEAQPIVTKYKEEARKLLPPSEKRTNRRNNRNKRNRQNRSRGQGYVGGQRRGYDNRAYGQQYWGQSGNRGGYRNFYDRYRGDYERFYSRDYEYNRYRDYYRQYNRDWQNYYYHHQQDRDRYYRNYYGYQGYR.

In terms of domain architecture, SAP spans 3 to 37 (VKRLKVTELRSELQRRGLDSRGLKMDLAQRLQEAL). Disordered regions lie at residues 44–239 (DEAG…DEEE) and 625–664 (EEAR…GQRR). Residues 73–97 (GDEEEEDDDEEEDEEALLEDEDEEP) show a composition bias toward acidic residues. Residues 142-161 (GEEHDNGKGEEDGPEERSGD) show a composition bias toward basic and acidic residues. Residue serine 159 is modified to Phosphoserine. Position 163 is a phosphothreonine (threonine 163). A phosphoserine mark is found at serine 166, serine 183, serine 186, serine 224, and serine 226. Over residues 183–221 (SEKSKPAGSDGERRGVKRQRDEKDEHGRAYYEFREEAYH) the composition is skewed to basic and acidic residues. Positions 224–417 (SKSPPPPEEE…VELNFGQKEE (194 aa)) constitute a B30.2/SPRY domain. A compositionally biased stretch (acidic residues) spans 230 to 239 (PEEEAKDEEE). Residues 625 to 637 (EEARKLLPPSEKR) are compositionally biased toward basic and acidic residues. Positions 638 to 652 (TNRRNNRNKRNRQNR) are enriched in basic residues. 4 positions are modified to omega-N-methylarginine: arginine 654, arginine 682, arginine 736, and arginine 745.

Binds to MLF1 and retains it in the nucleus.

It localises to the nucleus. This chain is Heterogeneous nuclear ribonucleoprotein U-like protein 2 (Hnrnpul2), found in Mus musculus (Mouse).